Here is a 286-residue protein sequence, read N- to C-terminus: 4-hydroxybenzoate octaprenyltransferase (286 aa).

A run of 7 helical transmembrane segments spans residues 21–40, 96–116, 142–162, 167–187, 210–230, 235–255, and 266–286; these read GTLLLLWPCLMALVLAAGGM, LFVILGLAAFGLVLLLNGLVV, FLGVVWSWSIPMAYAAQTGEV, WWLFAANWFWTVAYDTMYAMV, QIIGLFQFAALLCFIAAGWSA, LYGLGLLTFVGFSTYQQMLIF, and FLNNNWAGLALFVGLGADYLF.

The protein belongs to the UbiA prenyltransferase family. Requires Mg(2+) as cofactor.

The protein localises to the cell inner membrane. The enzyme catalyses all-trans-octaprenyl diphosphate + 4-hydroxybenzoate = 4-hydroxy-3-(all-trans-octaprenyl)benzoate + diphosphate. It participates in cofactor biosynthesis; ubiquinone biosynthesis. Its function is as follows. Catalyzes the prenylation of para-hydroxybenzoate (PHB) with an all-trans polyprenyl group. Mediates the second step in the final reaction sequence of ubiquinone-8 (UQ-8) biosynthesis, which is the condensation of the polyisoprenoid side chain with PHB, generating the first membrane-bound Q intermediate 3-octaprenyl-4-hydroxybenzoate. The sequence is that of 4-hydroxybenzoate octaprenyltransferase from Shewanella sp. (strain MR-4).